Here is a 146-residue protein sequence, read N- to C-terminus: Large ribosomal subunit protein uL15 (146 aa).

The span at 1-13 shows a compositional bias: basic and acidic residues; it reads MKLHELKAAEGSR. The tract at residues 1–61 is disordered; the sequence is MKLHELKAAE…GGQTPLFRRM (61 aa). Gly residues-rich tracts occupy residues 23-35 and 42-52; these read TSSG…GRGQ and SGGGVRLGFEG.

It belongs to the universal ribosomal protein uL15 family. As to quaternary structure, part of the 50S ribosomal subunit.

Its function is as follows. Binds to the 23S rRNA. This is Large ribosomal subunit protein uL15 from Streptococcus uberis (strain ATCC BAA-854 / 0140J).